Consider the following 573-residue polypeptide: Pyrophosphate--fructose 6-phosphate 1-phosphotransferase (573 aa).

Position 90 (Gly90) interacts with diphosphate. Asp184 lines the Mg(2+) pocket. Substrate contacts are provided by residues Thr212–Asp214, Lys251–Tyr252, Met259–Arg261, Glu320, and Tyr434–Arg437. Catalysis depends on Asp214, which acts as the Proton acceptor.

It belongs to the phosphofructokinase type A (PFKA) family. PPi-dependent PFK group II subfamily. Clade 'Long' sub-subfamily. In terms of assembly, homodimer. The cofactor is Mg(2+).

The protein resides in the cytoplasm. The catalysed reaction is beta-D-fructose 6-phosphate + diphosphate = beta-D-fructose 1,6-bisphosphate + phosphate + H(+). Its pathway is carbohydrate degradation; glycolysis; D-glyceraldehyde 3-phosphate and glycerone phosphate from D-glucose: step 3/4. Its activity is regulated as follows. Non-allosteric. Catalyzes the phosphorylation of D-fructose 6-phosphate, the first committing step of glycolysis. Uses inorganic phosphate (PPi) as phosphoryl donor instead of ATP like common ATP-dependent phosphofructokinases (ATP-PFKs), which renders the reaction reversible, and can thus function both in glycolysis and gluconeogenesis. Consistently, PPi-PFK can replace the enzymes of both the forward (ATP-PFK) and reverse (fructose-bisphosphatase (FBPase)) reactions. The protein is Pyrophosphate--fructose 6-phosphate 1-phosphotransferase of Treponema pallidum (strain Nichols).